The sequence spans 492 residues: UDP-N-acetylmuramoyl-L-alanyl-D-glutamate--2,6-diaminopimelate ligase (492 aa).

UDP-N-acetyl-alpha-D-muramoyl-L-alanyl-D-glutamate is bound at residue Ser-30. Residue 114 to 120 coordinates ATP; the sequence is GTNGKTS. UDP-N-acetyl-alpha-D-muramoyl-L-alanyl-D-glutamate is bound by residues 156 to 157, Ser-183, Gln-189, and Arg-191; that span reads TT. Position 223 is an N6-carboxylysine (Lys-223). Residues Arg-389, 413-416, Gly-462, and Glu-466 each bind meso-2,6-diaminopimelate; that span reads DNPR. The Meso-diaminopimelate recognition motif motif lies at 413-416; the sequence is DNPR.

Belongs to the MurCDEF family. MurE subfamily. Mg(2+) is required as a cofactor. In terms of processing, carboxylation is probably crucial for Mg(2+) binding and, consequently, for the gamma-phosphate positioning of ATP.

The protein resides in the cytoplasm. The catalysed reaction is UDP-N-acetyl-alpha-D-muramoyl-L-alanyl-D-glutamate + meso-2,6-diaminopimelate + ATP = UDP-N-acetyl-alpha-D-muramoyl-L-alanyl-gamma-D-glutamyl-meso-2,6-diaminopimelate + ADP + phosphate + H(+). It participates in cell wall biogenesis; peptidoglycan biosynthesis. Catalyzes the addition of meso-diaminopimelic acid to the nucleotide precursor UDP-N-acetylmuramoyl-L-alanyl-D-glutamate (UMAG) in the biosynthesis of bacterial cell-wall peptidoglycan. The polypeptide is UDP-N-acetylmuramoyl-L-alanyl-D-glutamate--2,6-diaminopimelate ligase (Neisseria meningitidis serogroup A / serotype 4A (strain DSM 15465 / Z2491)).